Here is a 247-residue protein sequence, read N- to C-terminus: 5'-nucleotidase SurE (247 aa).

A divalent metal cation-binding residues include Asp8, Asp9, Ser39, and Asn91.

This sequence belongs to the SurE nucleotidase family. A divalent metal cation is required as a cofactor.

It localises to the cytoplasm. The enzyme catalyses a ribonucleoside 5'-phosphate + H2O = a ribonucleoside + phosphate. In terms of biological role, nucleotidase that shows phosphatase activity on nucleoside 5'-monophosphates. The polypeptide is 5'-nucleotidase SurE (Ruthia magnifica subsp. Calyptogena magnifica).